We begin with the raw amino-acid sequence, 347 residues long: Heat-inducible transcription repressor HrcA (347 aa).

This sequence belongs to the HrcA family.

Functionally, negative regulator of class I heat shock genes (grpE-dnaK-dnaJ and groELS operons). Prevents heat-shock induction of these operons. The protein is Heat-inducible transcription repressor HrcA of Rhodococcus jostii (strain RHA1).